A 354-amino-acid chain; its full sequence is UDP-N-acetylglucosamine--N-acetylmuramyl-(pentapeptide) pyrophosphoryl-undecaprenol N-acetylglucosamine transferase (354 aa).

Residues 13 to 15 (SGG), Asn-125, Ser-189, Ile-242, 261 to 266 (ALTVSE), and Gln-286 contribute to the UDP-N-acetyl-alpha-D-glucosamine site.

This sequence belongs to the glycosyltransferase 28 family. MurG subfamily.

It localises to the cell inner membrane. The catalysed reaction is di-trans,octa-cis-undecaprenyl diphospho-N-acetyl-alpha-D-muramoyl-L-alanyl-D-glutamyl-meso-2,6-diaminopimeloyl-D-alanyl-D-alanine + UDP-N-acetyl-alpha-D-glucosamine = di-trans,octa-cis-undecaprenyl diphospho-[N-acetyl-alpha-D-glucosaminyl-(1-&gt;4)]-N-acetyl-alpha-D-muramoyl-L-alanyl-D-glutamyl-meso-2,6-diaminopimeloyl-D-alanyl-D-alanine + UDP + H(+). It functions in the pathway cell wall biogenesis; peptidoglycan biosynthesis. In terms of biological role, cell wall formation. Catalyzes the transfer of a GlcNAc subunit on undecaprenyl-pyrophosphoryl-MurNAc-pentapeptide (lipid intermediate I) to form undecaprenyl-pyrophosphoryl-MurNAc-(pentapeptide)GlcNAc (lipid intermediate II). This chain is UDP-N-acetylglucosamine--N-acetylmuramyl-(pentapeptide) pyrophosphoryl-undecaprenol N-acetylglucosamine transferase, found in Buchnera aphidicola subsp. Acyrthosiphon pisum (strain APS) (Acyrthosiphon pisum symbiotic bacterium).